The sequence spans 118 residues: uncharacterized protein (118 aa).

2 helical membrane-spanning segments follow: residues 5–25 (AFFN…SMVI) and 40–57 (FLTF…QHYI).

It localises to the membrane. This is an uncharacterized protein from African swine fever virus (strain Badajoz 1971 Vero-adapted) (Ba71V).